A 436-amino-acid chain; its full sequence is UDP-N-acetylmuramate--L-alanine ligase (436 aa).

ATP is bound at residue 111 to 117 (GTHGKTS).

Belongs to the MurCDEF family.

The protein resides in the cytoplasm. The enzyme catalyses UDP-N-acetyl-alpha-D-muramate + L-alanine + ATP = UDP-N-acetyl-alpha-D-muramoyl-L-alanine + ADP + phosphate + H(+). It participates in cell wall biogenesis; peptidoglycan biosynthesis. In terms of biological role, cell wall formation. The protein is UDP-N-acetylmuramate--L-alanine ligase of Pediococcus pentosaceus (strain ATCC 25745 / CCUG 21536 / LMG 10740 / 183-1w).